Consider the following 375-residue polypeptide: 23S rRNA (uracil(747)-C(5))-methyltransferase RlmC (375 aa).

[4Fe-4S] cluster is bound by residues cysteine 3, cysteine 11, cysteine 14, and cysteine 87. S-adenosyl-L-methionine-binding residues include glutamine 212, phenylalanine 241, glutamate 262, and asparagine 307. The active-site Nucleophile is the cysteine 334.

The protein belongs to the class I-like SAM-binding methyltransferase superfamily. RNA M5U methyltransferase family. RlmC subfamily.

It catalyses the reaction uridine(747) in 23S rRNA + S-adenosyl-L-methionine = 5-methyluridine(747) in 23S rRNA + S-adenosyl-L-homocysteine + H(+). Its function is as follows. Catalyzes the formation of 5-methyl-uridine at position 747 (m5U747) in 23S rRNA. This chain is 23S rRNA (uracil(747)-C(5))-methyltransferase RlmC, found in Salmonella arizonae (strain ATCC BAA-731 / CDC346-86 / RSK2980).